Consider the following 261-residue polypeptide: 14-3-3 protein 9 (261 aa).

Residues 239–261 (PEDAEDAQKGDATNKAGGGEDAE) are disordered.

The protein belongs to the 14-3-3 family. As to quaternary structure, homodimer.

The chain is 14-3-3 protein 9 (TFT9) from Solanum lycopersicum (Tomato).